A 64-amino-acid polypeptide reads, in one-letter code: Prokaryotic ubiquitin-like protein Pup (64 aa).

Residues 1–38 are disordered; that stretch reads MAQEQTKRGGGGGEDDDPTGSTAAGQERREKLTEETDD. The ARC ATPase binding stretch occupies residues 21–58; the sequence is STAAGQERREKLTEETDDLLDEIDDVLEENAEDFVRAY. The stretch at 23-52 forms a coiled coil; the sequence is AAGQERREKLTEETDDLLDEIDDVLEENAE. Glutamine 64 carries the post-translational modification Deamidated glutamine. Glutamine 64 participates in a covalent cross-link: Isoglutamyl lysine isopeptide (Gln-Lys) (interchain with K-? in acceptor proteins).

The protein belongs to the prokaryotic ubiquitin-like protein family. As to quaternary structure, strongly interacts with the proteasome-associated ATPase ARC through a hydrophobic interface; the interacting region of Pup lies in its C-terminal half. There is one Pup binding site per ARC hexamer ring. Is modified by deamidation of its C-terminal glutamine to glutamate by the deamidase Dop, a prerequisite to the subsequent pupylation process.

It participates in protein degradation; proteasomal Pup-dependent pathway. In terms of biological role, protein modifier that is covalently attached to lysine residues of substrate proteins, thereby targeting them for proteasomal degradation. The tagging system is termed pupylation. The sequence is that of Prokaryotic ubiquitin-like protein Pup from Mycolicibacterium gilvum (strain PYR-GCK) (Mycobacterium gilvum (strain PYR-GCK)).